The sequence spans 552 residues: Hydroxylamine reductase (552 aa).

[4Fe-4S] cluster-binding residues include Cys3, Cys6, Cys15, and Cys21. Hybrid [4Fe-2O-2S] cluster-binding residues include His247, Glu271, Cys315, Cys407, Cys435, Cys460, Glu495, and Lys497. The residue at position 407 (Cys407) is a Cysteine persulfide.

This sequence belongs to the HCP family. It depends on [4Fe-4S] cluster as a cofactor. Hybrid [4Fe-2O-2S] cluster is required as a cofactor.

The protein resides in the cytoplasm. The enzyme catalyses A + NH4(+) + H2O = hydroxylamine + AH2 + H(+). Its function is as follows. Catalyzes the reduction of hydroxylamine to form NH(3) and H(2)O. The protein is Hydroxylamine reductase of Thermosipho melanesiensis (strain DSM 12029 / CIP 104789 / BI429).